A 232-amino-acid chain; its full sequence is Orotidine 5'-phosphate decarboxylase (232 aa).

Substrate contacts are provided by residues aspartate 13, lysine 35, 62–71 (DLKFHDIPNT), threonine 121, arginine 182, glutamine 191, glycine 211, and arginine 212. The active-site Proton donor is the lysine 64.

Belongs to the OMP decarboxylase family. Type 1 subfamily. Homodimer.

It catalyses the reaction orotidine 5'-phosphate + H(+) = UMP + CO2. It functions in the pathway pyrimidine metabolism; UMP biosynthesis via de novo pathway; UMP from orotate: step 2/2. In terms of biological role, catalyzes the decarboxylation of orotidine 5'-monophosphate (OMP) to uridine 5'-monophosphate (UMP). The chain is Orotidine 5'-phosphate decarboxylase from Acinetobacter baumannii (strain AB0057).